A 196-amino-acid polypeptide reads, in one-letter code: Proteasome subunit beta 1 (196 aa).

The propeptide at 1–6 (MEELPA) is removed in mature form; by autocatalysis. Residue Thr7 is the Nucleophile of the active site.

This sequence belongs to the peptidase T1B family. In terms of assembly, the 20S proteasome core is composed of 14 alpha and 14 beta subunits that assemble into four stacked heptameric rings, resulting in a barrel-shaped structure. The two inner rings, each composed of seven catalytic beta subunits, are sandwiched by two outer rings, each composed of seven alpha subunits. The catalytic chamber with the active sites is on the inside of the barrel. Has a gated structure, the ends of the cylinder being occluded by the N-termini of the alpha-subunits. Is capped at one or both ends by the proteasome regulatory ATPase, PAN.

The protein resides in the cytoplasm. The enzyme catalyses Cleavage of peptide bonds with very broad specificity.. The formation of the proteasomal ATPase PAN-20S proteasome complex, via the docking of the C-termini of PAN into the intersubunit pockets in the alpha-rings, triggers opening of the gate for substrate entry. Interconversion between the open-gate and close-gate conformations leads to a dynamic regulation of the 20S proteasome proteolysis activity. Component of the proteasome core, a large protease complex with broad specificity involved in protein degradation. This is Proteasome subunit beta 1 from Saccharolobus solfataricus (strain ATCC 35092 / DSM 1617 / JCM 11322 / P2) (Sulfolobus solfataricus).